The sequence spans 399 residues: Mannan endo-1,4-beta-mannosidase 4 (399 aa).

The first 26 residues, 1–26 (MNNSIILIFVAILIIFPNEFSKPTRA), serve as a signal peptide directing secretion. Substrate contacts are provided by tryptophan 88 and asparagine 203. Glutamate 204 functions as the Proton donor in the catalytic mechanism. Tyrosine 279 serves as a coordination point for substrate. The active-site Nucleophile is the glutamate 318. A disulfide bridge connects residues cysteine 347 and cysteine 354. Residue tryptophan 360 coordinates substrate.

This sequence belongs to the glycosyl hydrolase 5 (cellulase A) family. In terms of tissue distribution, expressed in flowers and fruit pericarp.

Its subcellular location is the secreted. It catalyses the reaction Random hydrolysis of (1-&gt;4)-beta-D-mannosidic linkages in mannans, galactomannans and glucomannans.. Its function is as follows. Possesses endo-beta-mannanase and mannan transglycosylase activities. May be involved in cell wall degradation during fruit ripening. This is Mannan endo-1,4-beta-mannosidase 4 (MAN4) from Solanum lycopersicum (Tomato).